A 356-amino-acid polypeptide reads, in one-letter code: Phosphoribosylformylglycinamidine cyclo-ligase (356 aa).

This sequence belongs to the AIR synthase family.

The protein localises to the cytoplasm. It carries out the reaction 2-formamido-N(1)-(5-O-phospho-beta-D-ribosyl)acetamidine + ATP = 5-amino-1-(5-phospho-beta-D-ribosyl)imidazole + ADP + phosphate + H(+). Its pathway is purine metabolism; IMP biosynthesis via de novo pathway; 5-amino-1-(5-phospho-D-ribosyl)imidazole from N(2)-formyl-N(1)-(5-phospho-D-ribosyl)glycinamide: step 2/2. The sequence is that of Phosphoribosylformylglycinamidine cyclo-ligase from Nitrobacter hamburgensis (strain DSM 10229 / NCIMB 13809 / X14).